Consider the following 351-residue polypeptide: MGSSVEQNILVTGGAGFIGTHTVVQLLNQGFKVTIIDNLDNSVVEAVHRVRELVGPDLSTKLEFNLGDLRNKGDIEKLFSNQRFDAVIHFAGLKAVGESVGNPRRYFDNNLVGTINLYETMAKYNCKMMVFSSSATVYGQPEIVPCVEDFELQAMNPYGRTKLFLEEIARDIHAAEPEWKIILLRYFNPVGAHESGRIGEDPKGIPNNLMPYIQQVAVGRLPELNVFGHDYPTMDGSAVRDYIHVMDLADGHVAALNKLFSDSKIGCTAYNLGTGQGTSVLEMVSSFEKASGKKIPIKLCPRRAGDATAVYASTQKAEKELGWKAKYGVDEMCRDQWNWANKNPWGFQKKP.

An NAD(+)-binding site is contributed by 8–39 (NILVTGGAGFIGTHTVVQLLNQGFKVTIIDNL). Serine 134 lines the substrate pocket. Tyrosine 158 acts as the Proton acceptor in catalysis.

It belongs to the NAD(P)-dependent epimerase/dehydratase family. Homodimer. Heterodimer. NAD(+) serves as cofactor. Ubiquitous.

It carries out the reaction UDP-alpha-D-glucose = UDP-alpha-D-galactose. The enzyme catalyses UDP-beta-L-arabinopyranose = UDP-alpha-D-xylose. It participates in carbohydrate metabolism; galactose metabolism. It functions in the pathway nucleotide-sugar biosynthesis; UDP-L-arabinose biosynthesis; UDP-L-arabinose from UDP-alpha-D-xylose: step 1/1. Its pathway is cell wall biogenesis; cell wall polysaccharide biosynthesis. Strongly inhibited by UDP. Its function is as follows. Catalyzes the interconversion between UDP-glucose and UDP-galactose and the interconversion between UDP-arabinose and UDP-xylose. Cooperates with UGE2 in pollen development. May preferentially act in the UDP-galactose to UDP-glucose direction, therefore displaying a role in carbohydrate catabolism. This chain is Bifunctional UDP-glucose 4-epimerase and UDP-xylose 4-epimerase 3 (UGE3), found in Arabidopsis thaliana (Mouse-ear cress).